We begin with the raw amino-acid sequence, 254 residues long: Persulfide dioxygenase ETHE1, mitochondrial (254 aa).

The transit peptide at 1–7 directs the protein to the mitochondrion; sequence MAEAVLR. Residues Ser14 and Ser19 each carry the phosphoserine modification. Lys66 is subject to N6-acetyllysine. Positions 79, 135, and 154 each coordinate Fe cation. N6-acetyllysine; alternate is present on Lys172. Lys172 carries the post-translational modification N6-succinyllysine; alternate.

The protein belongs to the metallo-beta-lactamase superfamily. Glyoxalase II family. Homodimer. Monomer. Interacts with TST. May interact with RELA. It depends on Fe(2+) as a cofactor. As to expression, ubiquitously expressed.

It localises to the cytoplasm. The protein resides in the nucleus. It is found in the mitochondrion matrix. The enzyme catalyses S-sulfanylglutathione + O2 + H2O = sulfite + glutathione + 2 H(+). Glutathione increases enzyme activity. Its function is as follows. Sulfur dioxygenase that plays an essential role in hydrogen sulfide catabolism in the mitochondrial matrix. Hydrogen sulfide (H(2)S) is first oxidized by SQRDL, giving rise to cysteine persulfide residues. ETHE1 consumes molecular oxygen to catalyze the oxidation of the persulfide, once it has been transferred to a thiophilic acceptor, such as glutathione (R-SSH). Plays an important role in metabolic homeostasis in mitochondria by metabolizing hydrogen sulfide and preventing the accumulation of supraphysiological H(2)S levels that have toxic effects, due to the inhibition of cytochrome c oxidase. First described as a protein that can shuttle between the nucleus and the cytoplasm and suppress p53-induced apoptosis by sequestering the transcription factor RELA/NFKB3 in the cytoplasm and preventing its accumulation in the nucleus. The protein is Persulfide dioxygenase ETHE1, mitochondrial (ETHE1) of Homo sapiens (Human).